The following is a 140-amino-acid chain: MTIQYTFSMIKPDAIKRNKIGQVNAYLENGGLKIVAQKMRFLTKYEAECFYDEHRARTFFNSLVEYITSGAVVLQVLKGEDAIILNRTIMGATNPAEAEAGTIRKDLGESIEANSIHGSDSENSAKREIAFFFNKSEIIE.

The ATP site is built by lysine 11, phenylalanine 59, arginine 87, threonine 93, arginine 104, and asparagine 114. Histidine 117 functions as the Pros-phosphohistidine intermediate in the catalytic mechanism.

It belongs to the NDK family. As to quaternary structure, homotetramer. Requires Mg(2+) as cofactor.

Its subcellular location is the cytoplasm. The catalysed reaction is a 2'-deoxyribonucleoside 5'-diphosphate + ATP = a 2'-deoxyribonucleoside 5'-triphosphate + ADP. It catalyses the reaction a ribonucleoside 5'-diphosphate + ATP = a ribonucleoside 5'-triphosphate + ADP. In terms of biological role, major role in the synthesis of nucleoside triphosphates other than ATP. The ATP gamma phosphate is transferred to the NDP beta phosphate via a ping-pong mechanism, using a phosphorylated active-site intermediate. This chain is Nucleoside diphosphate kinase, found in Rickettsia akari (strain Hartford).